A 504-amino-acid polypeptide reads, in one-letter code: UDP-N-acetylmuramoylalanine--D-glutamate ligase (504 aa).

129 to 135 provides a ligand contact to ATP; sequence GTNGKTT.

It belongs to the MurCDEF family.

It is found in the cytoplasm. It carries out the reaction UDP-N-acetyl-alpha-D-muramoyl-L-alanine + D-glutamate + ATP = UDP-N-acetyl-alpha-D-muramoyl-L-alanyl-D-glutamate + ADP + phosphate + H(+). It functions in the pathway cell wall biogenesis; peptidoglycan biosynthesis. Functionally, cell wall formation. Catalyzes the addition of glutamate to the nucleotide precursor UDP-N-acetylmuramoyl-L-alanine (UMA). The polypeptide is UDP-N-acetylmuramoylalanine--D-glutamate ligase (Burkholderia mallei (strain ATCC 23344)).